Reading from the N-terminus, the 623-residue chain is Chaperone protein DnaK (623 aa).

T197 bears the Phosphothreonine; by autocatalysis mark. The tract at residues 600-623 (KKDENAGANGGNKKDDDVIDAEVE) is disordered.

This sequence belongs to the heat shock protein 70 family.

Functionally, acts as a chaperone. In Campylobacter concisus (strain 13826), this protein is Chaperone protein DnaK.